Consider the following 326-residue polypeptide: Adenosine receptor A1 (326 aa).

Residues 1–10 are Extracellular-facing; the sequence is MPPYISAFQA. A helical transmembrane segment spans residues 11–33; the sequence is AYIGIEVLIALVSVPGNVLVIWA. Residues 34-46 lie on the Cytoplasmic side of the membrane; the sequence is VKVNQALRDATFC. The helical transmembrane segment at 47-69 threads the bilayer; the sequence is FIVSLAVADVAVGALVIPLAILI. Residues 70 to 80 lie on the Extracellular side of the membrane; the sequence is NIGPQTYFHTC. Cys-80 and Cys-169 are oxidised to a cystine. A helical membrane pass occupies residues 81 to 102; that stretch reads LMVACPVLILTQSSILALLAIA. The Cytoplasmic segment spans residues 103 to 123; that stretch reads VDRYLRVKIPLRYKTVVTQRR. A helical transmembrane segment spans residues 124–146; the sequence is AAVAIAGCWILSLVVGLTPMFGW. Residues 147 to 176 are Extracellular-facing; the sequence is NNLSEVEQAWIANGSVGEPVIKCEFEKVIS. N-linked (GlcNAc...) asparagine glycans are attached at residues Asn-148 and Asn-159. Residues 177 to 201 form a helical membrane-spanning segment; it reads MEYMVYFNFFVWVLPPLLLMVLIYL. Residues 202 to 235 are Cytoplasmic-facing; it reads EVFYLIRKQLNKKVSASSGDPQKYYGKELKIAKS. Residues 236 to 259 traverse the membrane as a helical segment; the sequence is LALILFLFALSWLPLHILNCITLF. At 260-267 the chain is on the extracellular side; sequence CPTCQKPS. A helical transmembrane segment spans residues 268 to 292; that stretch reads ILIYIAIFLTHGNSAMNPIVYAFRI. Topologically, residues 293-326 are cytoplasmic; the sequence is HKFRVTFLKIWNDHFRCQPKPPIEEDIPEEKADD. The S-palmitoyl cysteine moiety is linked to residue Cys-309.

This sequence belongs to the G-protein coupled receptor 1 family.

Its subcellular location is the cell membrane. In terms of biological role, receptor for adenosine. The activity of this receptor is mediated by G proteins which inhibit adenylyl cyclase. The polypeptide is Adenosine receptor A1 (Adora1) (Mus musculus (Mouse)).